The chain runs to 85 residues: Large ribosomal subunit protein bL27 (85 aa).

Residues 1-20 (MAHKKAGGSTRNGRDSESKR) form a disordered region.

This sequence belongs to the bacterial ribosomal protein bL27 family.

This chain is Large ribosomal subunit protein bL27, found in Azotobacter vinelandii (strain DJ / ATCC BAA-1303).